Here is a 328-residue protein sequence, read N- to C-terminus: D-cysteine desulfhydrase (328 aa).

Lysine 51 carries the N6-(pyridoxal phosphate)lysine modification.

The protein belongs to the ACC deaminase/D-cysteine desulfhydrase family. As to quaternary structure, homodimer. The cofactor is pyridoxal 5'-phosphate.

It catalyses the reaction D-cysteine + H2O = hydrogen sulfide + pyruvate + NH4(+) + H(+). Catalyzes the alpha,beta-elimination reaction of D-cysteine and of several D-cysteine derivatives. It could be a defense mechanism against D-cysteine. This chain is D-cysteine desulfhydrase, found in Escherichia coli (strain SMS-3-5 / SECEC).